The sequence spans 302 residues: Oxygen-dependent coproporphyrinogen-III oxidase (302 aa).

Ser94 provides a ligand contact to substrate. The a divalent metal cation site is built by His98 and His108. The Proton donor role is filled by His108. 110–112 (NVR) provides a ligand contact to substrate. A divalent metal cation is bound by residues His147 and His177. The important for dimerization stretch occupies residues 242–277 (YVEFNLVWDRGTLFGLQSGGRTESILMSMPPLARWE). Residue 260-262 (GGR) coordinates substrate.

It belongs to the aerobic coproporphyrinogen-III oxidase family. Homodimer. A divalent metal cation is required as a cofactor.

It localises to the cytoplasm. It carries out the reaction coproporphyrinogen III + O2 + 2 H(+) = protoporphyrinogen IX + 2 CO2 + 2 H2O. It participates in porphyrin-containing compound metabolism; protoporphyrin-IX biosynthesis; protoporphyrinogen-IX from coproporphyrinogen-III (O2 route): step 1/1. Its function is as follows. Involved in the heme biosynthesis. Catalyzes the aerobic oxidative decarboxylation of propionate groups of rings A and B of coproporphyrinogen-III to yield the vinyl groups in protoporphyrinogen-IX. In Photorhabdus laumondii subsp. laumondii (strain DSM 15139 / CIP 105565 / TT01) (Photorhabdus luminescens subsp. laumondii), this protein is Oxygen-dependent coproporphyrinogen-III oxidase.